Here is a 323-residue protein sequence, read N- to C-terminus: AA9 family lytic polysaccharide monooxygenase A (323 aa).

The signal sequence occupies residues 1–19 (MKSFISLLGLSFLTCHASA). Residues histidine 20 and histidine 90 each contribute to the Cu(2+) site. The cysteines at positions 59 and 175 are disulfide-linked. Positions 161 and 170 each coordinate O2. Tyrosine 172 lines the Cu(2+) pocket. Residue asparagine 215 is glycosylated (N-linked (GlcNAc...) asparagine). The 37-residue stretch at 287-323 (AVVQKFGQCGGQGWTGGTTCVAGSTCTATNAYYSQCL) folds into the CBM1 domain.

Belongs to the polysaccharide monooxygenase AA9 family. The cofactor is Cu(2+).

The protein resides in the secreted. It catalyses the reaction [(1-&gt;4)-beta-D-glucosyl]n+m + reduced acceptor + O2 = 4-dehydro-beta-D-glucosyl-[(1-&gt;4)-beta-D-glucosyl]n-1 + [(1-&gt;4)-beta-D-glucosyl]m + acceptor + H2O.. Lytic polysaccharide monooxygenase (LPMO) that depolymerizes crystalline and amorphous polysaccharides via the oxidation of scissile alpha- or beta-(1-4)-glycosidic bonds, yielding C1 and C4 oxidation products. Catalysis by LPMOs requires the reduction of the active-site copper from Cu(II) to Cu(I) by a reducing agent and H(2)O(2) or O(2) as a cosubstrate. In Botryotinia fuckeliana (strain B05.10) (Noble rot fungus), this protein is AA9 family lytic polysaccharide monooxygenase A.